The primary structure comprises 185 residues: ATP-dependent protease subunit HslV (185 aa).

Residue Thr13 is part of the active site. Residues Gly167, Cys170, and Thr173 each coordinate Na(+).

It belongs to the peptidase T1B family. HslV subfamily. In terms of assembly, a double ring-shaped homohexamer of HslV is capped on each side by a ring-shaped HslU homohexamer. The assembly of the HslU/HslV complex is dependent on binding of ATP.

The protein resides in the cytoplasm. The enzyme catalyses ATP-dependent cleavage of peptide bonds with broad specificity.. Its activity is regulated as follows. Allosterically activated by HslU binding. Its function is as follows. Protease subunit of a proteasome-like degradation complex believed to be a general protein degrading machinery. The chain is ATP-dependent protease subunit HslV from Sinorhizobium medicae (strain WSM419) (Ensifer medicae).